We begin with the raw amino-acid sequence, 481 residues long: 3-isopropylmalate dehydratase large subunit (481 aa).

Residues cysteine 363, cysteine 423, and cysteine 426 each contribute to the [4Fe-4S] cluster site. The interval 432–459 (DQLKPGERSASTSNRNFEGRQGPGGRTH) is disordered.

This sequence belongs to the aconitase/IPM isomerase family. LeuC type 1 subfamily. In terms of assembly, heterodimer of LeuC and LeuD. The cofactor is [4Fe-4S] cluster.

The catalysed reaction is (2R,3S)-3-isopropylmalate = (2S)-2-isopropylmalate. It functions in the pathway amino-acid biosynthesis; L-leucine biosynthesis; L-leucine from 3-methyl-2-oxobutanoate: step 2/4. In terms of biological role, catalyzes the isomerization between 2-isopropylmalate and 3-isopropylmalate, via the formation of 2-isopropylmaleate. The sequence is that of 3-isopropylmalate dehydratase large subunit from Corynebacterium glutamicum (strain ATCC 13032 / DSM 20300 / JCM 1318 / BCRC 11384 / CCUG 27702 / LMG 3730 / NBRC 12168 / NCIMB 10025 / NRRL B-2784 / 534).